We begin with the raw amino-acid sequence, 173 residues long: Peptide methionine sulfoxide reductase MsrA (173 aa).

The active site involves cysteine 10.

The protein belongs to the MsrA Met sulfoxide reductase family.

It carries out the reaction L-methionyl-[protein] + [thioredoxin]-disulfide + H2O = L-methionyl-(S)-S-oxide-[protein] + [thioredoxin]-dithiol. It catalyses the reaction [thioredoxin]-disulfide + L-methionine + H2O = L-methionine (S)-S-oxide + [thioredoxin]-dithiol. Has an important function as a repair enzyme for proteins that have been inactivated by oxidation. Catalyzes the reversible oxidation-reduction of methionine sulfoxide in proteins to methionine. This Acinetobacter baumannii (strain AB307-0294) protein is Peptide methionine sulfoxide reductase MsrA.